Consider the following 446-residue polypeptide: Sphingomyelinase phosphodiesterase C (446 aa).

Positions 1 to 26 (MKFRNNLTLYLIFIIVFTIYISLTIS) are cleaved as a signal peptide. The N-linked (GlcNAc...) asparagine glycan is linked to asparagine 6. Positions 39 and 41 each coordinate Zn(2+). Cysteine 56 and cysteine 78 form a disulfide bridge. Aspartate 107 is a Zn(2+) binding site. Asparagine 118 and asparagine 128 each carry an N-linked (GlcNAc...) asparagine glycan. Asparagine 148 provides a ligand contact to Zn(2+). 4 N-linked (GlcNAc...) asparagine glycosylation sites follow: asparagine 178, asparagine 217, asparagine 229, and asparagine 234. Zn(2+) is bound by residues histidine 247, histidine 287, and histidine 289. Asparagine 342 and asparagine 357 each carry an N-linked (GlcNAc...) asparagine glycan. Residues cysteine 429 and cysteine 442 are joined by a disulfide bond.

Belongs to the acid sphingomyelinase family. Zn(2+) is required as a cofactor.

It is found in the secreted. This is Sphingomyelinase phosphodiesterase C (sgmC) from Dictyostelium discoideum (Social amoeba).